A 252-amino-acid polypeptide reads, in one-letter code: MERVLIVNADDFGLSKGQNYGIVEAYRNGVVTSTTALVNGEAIDHAAQLSRELPALGVGMHFVLTLGKPVSEMPGLTRDGLLGKWIWQMAEEDTLPLDEIAHELACQYQRFIDVFGREPTHLDSHHHVHMFPQIFPIVARFAAQRGIALRIDRQTVLNADDLPSDLRSTQGFSSEFYGEEITEACFLRILDASAHRGEASLEVMCHPAFVDNIIRQSAYCYPRLTELEVLTSASLKAGIAERGYRPGSFLDI.

Mg(2+) is bound by residues His-61 and His-125.

The protein belongs to the YdjC deacetylase family. ChbG subfamily. As to quaternary structure, homodimer. Mg(2+) serves as cofactor.

The protein resides in the cytoplasm. The enzyme catalyses N,N'-diacetylchitobiose + H2O = N-acetyl-beta-D-glucosaminyl-(1-&gt;4)-D-glucosamine + acetate. The catalysed reaction is diacetylchitobiose-6'-phosphate + H2O = N'-monoacetylchitobiose-6'-phosphate + acetate. Its pathway is glycan degradation; chitin degradation. In terms of biological role, involved in the degradation of chitin. ChbG is essential for growth on the acetylated chitooligosaccharides chitobiose and chitotriose but is dispensable for growth on cellobiose and chitosan dimer, the deacetylated form of chitobiose. Deacetylation of chitobiose-6-P and chitotriose-6-P is necessary for both the activation of the chb promoter by the regulatory protein ChbR and the hydrolysis of phosphorylated beta-glucosides by the phospho-beta-glucosidase ChbF. Catalyzes the removal of only one acetyl group from chitobiose-6-P to yield monoacetylchitobiose-6-P, the inducer of ChbR and the substrate of ChbF. The polypeptide is Chitooligosaccharide deacetylase (Salmonella newport (strain SL254)).